The primary structure comprises 447 residues: Phosphoglucosamine mutase (447 aa).

Catalysis depends on Ser-102, which acts as the Phosphoserine intermediate. Positions 102, 241, 243, and 245 each coordinate Mg(2+). The residue at position 102 (Ser-102) is a Phosphoserine.

The protein belongs to the phosphohexose mutase family. Mg(2+) is required as a cofactor. Post-translationally, activated by phosphorylation.

It catalyses the reaction alpha-D-glucosamine 1-phosphate = D-glucosamine 6-phosphate. Its function is as follows. Catalyzes the conversion of glucosamine-6-phosphate to glucosamine-1-phosphate. This chain is Phosphoglucosamine mutase, found in Pseudomonas savastanoi pv. phaseolicola (strain 1448A / Race 6) (Pseudomonas syringae pv. phaseolicola (strain 1448A / Race 6)).